A 239-amino-acid chain; its full sequence is Increased recombination centers protein 22-2 (239 aa).

Positions 1–19 (MKLSTIFTAFAATIATVAG) are cleaved as a signal peptide. At 20–161 (YETTGSKQTV…AAVSFFDPRL (142 aa)) the chain is on the lumenal side. Residues 162-182 (IFLELVLLITFAGLIYVGYEI) form a helical membrane-spanning segment. The Cytoplasmic segment spans residues 183-239 (WGKQYFKGVAPVKAKKVSAAKASSPVASGPSTTSATGYDTNWIPESHLKQKKTKKVN). Low complexity predominate over residues 201–213 (AAKASSPVASGPS). The interval 201 to 222 (AAKASSPVASGPSTTSATGYDT) is disordered.

It belongs to the IRC22 family.

The protein resides in the endoplasmic reticulum membrane. In terms of biological role, is probably involved in a pathway contributing to genomic integrity. This chain is Increased recombination centers protein 22-2 (IRC22-2), found in Candida albicans (strain WO-1) (Yeast).